A 501-amino-acid chain; its full sequence is Lysine--tRNA ligase (501 aa).

The Mg(2+) site is built by E411 and E418.

It belongs to the class-II aminoacyl-tRNA synthetase family. Homodimer. Requires Mg(2+) as cofactor.

It is found in the cytoplasm. It catalyses the reaction tRNA(Lys) + L-lysine + ATP = L-lysyl-tRNA(Lys) + AMP + diphosphate. The protein is Lysine--tRNA ligase of Magnetococcus marinus (strain ATCC BAA-1437 / JCM 17883 / MC-1).